Consider the following 1026-residue polypeptide: RecBCD enzyme subunit RecB (1026 aa).

The UvrD-like helicase ATP-binding domain maps to 1 to 438 (MSSFDIFSPT…LILDTNYRST (438 aa)). A DNA-binding and helicase activity, interacts with RecC region spans residues 1–766 (MSSFDIFSPT…LANYANVTKH (766 aa)). 21-28 (ASAGTGKT) provides a ligand contact to ATP. A nuclease activity, interacts with RecD and RecA region spans residues 815 to 1026 (SRTIHSFSST…KGNGFLQPGR (212 aa)). His854, Asp940, and Asp953 together coordinate Mg(2+). Residue Asp953 is the For nuclease activity of the active site.

The protein belongs to the helicase family. UvrD subfamily. Heterotrimer of RecB, RecC and RecD. All subunits contribute to DNA-binding. Interacts with RecA. It depends on Mg(2+) as a cofactor.

The catalysed reaction is Exonucleolytic cleavage (in the presence of ATP) in either 5'- to 3'- or 3'- to 5'-direction to yield 5'-phosphooligonucleotides.. The enzyme catalyses Couples ATP hydrolysis with the unwinding of duplex DNA by translocating in the 3'-5' direction.. It catalyses the reaction ATP + H2O = ADP + phosphate + H(+). A helicase/nuclease that prepares dsDNA breaks (DSB) for recombinational DNA repair. Binds to DSBs and unwinds DNA via a highly rapid and processive ATP-dependent bidirectional helicase activity. Unwinds dsDNA until it encounters a Chi (crossover hotspot instigator) sequence from the 3' direction. Cuts ssDNA a few nucleotides 3' to the Chi site. The properties and activities of the enzyme are changed at Chi. The Chi-altered holoenzyme produces a long 3'-ssDNA overhang and facilitates RecA-binding to the ssDNA for homologous DNA recombination and repair. Holoenzyme degrades any linearized DNA that is unable to undergo homologous recombination. In the holoenzyme this subunit contributes ATPase, 3'-5' helicase, exonuclease activity and loads RecA onto ssDNA. The sequence is that of RecBCD enzyme subunit RecB from Chlamydia trachomatis serovar D (strain ATCC VR-885 / DSM 19411 / UW-3/Cx).